A 217-amino-acid chain; its full sequence is Large ribosomal subunit protein bL25 (217 aa).

Positions 178–217 (VVAPTEEPTEEEIEAMEGEQQTEEPEVVGESKEDEEKTEE) are disordered. Residues 184–205 (EPTEEEIEAMEGEQQTEEPEVV) are compositionally biased toward acidic residues. Basic and acidic residues predominate over residues 206–217 (GESKEDEEKTEE).

Belongs to the bacterial ribosomal protein bL25 family. CTC subfamily. Part of the 50S ribosomal subunit; part of the 5S rRNA/L5/L18/L25 subcomplex. Contacts the 5S rRNA. Binds to the 5S rRNA independently of L5 and L18.

This is one of the proteins that binds to the 5S RNA in the ribosome where it forms part of the central protuberance. In Staphylococcus aureus (strain MRSA252), this protein is Large ribosomal subunit protein bL25.